The primary structure comprises 203 residues: METLSQDSLLECQICFNYYSPRRRPKLLDCKHTCCSVCLQQMRTSQKDVRCPWCRGITKLPPGFSVAQLPDDPEVLAVIAIPHASEHTPVFIKLPSNGCYMLPLPISKERALLPGDMGCRLLPGSQQKSVTVVTVPAEQRPLQGGAPQEAVEEEPDRRGVAKSSTWSGVCTVILVACVLVFLLGIVLHNMSCISKRFTVISCG.

An RING-type zinc finger spans residues Cys12 to Arg55. The interval Ile106–Thr165 is necessary for interaction with RRAGA. A helical membrane pass occupies residues Ser167–Leu187.

This sequence belongs to the RNF152 family. Interacts with RRAGA (inactive GDP-bound form); stimulated by amino acid starvation. Post-translationally, ubiquitinated. Autoubiquitinated in vitro, leading to its degradation by the proteasome.

The protein resides in the lysosome membrane. It carries out the reaction S-ubiquitinyl-[E2 ubiquitin-conjugating enzyme]-L-cysteine + [acceptor protein]-L-lysine = [E2 ubiquitin-conjugating enzyme]-L-cysteine + N(6)-ubiquitinyl-[acceptor protein]-L-lysine.. It functions in the pathway protein modification; protein ubiquitination. Functionally, E3 ubiquitin-protein ligase that acts as a negative regulator of mTORC1 signaling by mediating ubiquitination of RagA/RRAGA and RHEB. Catalyzes 'Lys-63'-linked polyubiquitination of RagA/RRAGA in response to amino acid starvation, thereby regulating mTORC1 signaling. Also mediates monoubiquitination of RHEB, promoting its association with the TSC-TBC complex and subsequent inhibition. Also mediates 'Lys-48'-linked polyubiquitination of target proteins and their subsequent targeting to the proteasome for degradation. Induces apoptosis when overexpressed. The polypeptide is E3 ubiquitin-protein ligase RNF152 (Ailuropoda melanoleuca (Giant panda)).